Consider the following 314-residue polypeptide: Cyclic di-GMP binding protein TDE_0214 (314 aa).

Residues 146–234 (QKRRNERVVI…KTVRTEPVEG (89 aa)) form the PilZ domain. Residues 288–300 (TPVSSPIGTNTAP) show a composition bias toward polar residues. A disordered region spans residues 288-314 (TPVSSPIGTNTAPLTPPPADSAPEQIS).

Cyclic-di-GMP binding protein that plays important roles in motility, chemotaxis, biofilm formation and virulence. In Treponema denticola (strain ATCC 35405 / DSM 14222 / CIP 103919 / JCM 8153 / KCTC 15104), this protein is Cyclic di-GMP binding protein TDE_0214.